The following is a 212-amino-acid chain: Translation initiation factor IF-3 (212 aa).

It belongs to the IF-3 family. Monomer.

It localises to the cytoplasm. IF-3 binds to the 30S ribosomal subunit and shifts the equilibrium between 70S ribosomes and their 50S and 30S subunits in favor of the free subunits, thus enhancing the availability of 30S subunits on which protein synthesis initiation begins. This chain is Translation initiation factor IF-3, found in Synechococcus sp. (strain CC9311).